A 398-amino-acid polypeptide reads, in one-letter code: Probable transcription factor PosF21 (398 aa).

2 disordered regions span residues M1–S46 and A112–G150. The span at P7 to P19 shows a compositional bias: pro residues. A compositionally biased stretch (polar residues) spans A125 to S148. The region spanning D201–L264 is the bZIP domain. The basic motif stretch occupies residues K203 to R224. The tract at residues L229 to L264 is leucine-zipper.

This sequence belongs to the bZIP family.

Its subcellular location is the nucleus. In terms of biological role, putative transcription factor with an activatory role. This is Probable transcription factor PosF21 (POSF21) from Arabidopsis thaliana (Mouse-ear cress).